A 113-amino-acid polypeptide reads, in one-letter code: uncharacterized protein (113 aa).

This sequence to H.pylori HP0245/JHP0230.

This is an uncharacterized protein from Campylobacter jejuni subsp. jejuni serotype O:2 (strain ATCC 700819 / NCTC 11168).